The primary structure comprises 198 residues: Protein hunchback (198 aa).

Disordered stretches follow at residues 16–116 (SHHH…NPMQ) and 158–198 (LTPP…KYMA). The segment covering 17 to 31 (HHHHHHHAHHSHHQH) has biased composition (basic residues). Low complexity-rich tracts occupy residues 35-46 (SNSNSNASSPHQ) and 68-83 (QQQQ…QQQQ). Residues 95-105 (PSPSNNDQNSP) show a composition bias toward polar residues. Residues 179–198 (EPEKEHDLMSNSSEDMKYMA) show a composition bias toward basic and acidic residues.

This sequence belongs to the hunchback C2H2-type zinc-finger protein family.

The protein resides in the nucleus. In terms of biological role, gap class segmentation protein that controls development of head structures. In Drosophila cyrtoloma (Fruit fly), this protein is Protein hunchback (hb).